Here is a 138-residue protein sequence, read N- to C-terminus: Basic phospholipase A2 homolog Ts-K49b (138 aa).

The first 16 residues, 1 to 16 (MRTLWIMAVLLVGVEG), serve as a signal peptide directing secretion. Cystine bridges form between Cys-42–Cys-131, Cys-44–Cys-60, Cys-65–Cys-138, Cys-66–Cys-104, Cys-73–Cys-97, and Cys-91–Cys-102. The segment at 121 to 133 (KKKKINLKLFCKK) is important for membrane-damaging activities in eukaryotes and bacteria; heparin-binding.

Expressed by the venom gland.

Its subcellular location is the secreted. Snake venom phospholipase A2 homolog that lacks catalytic activity. It shows myotoxic and weak anticoagulant activities. A model of myotoxic mechanism has been proposed: an apo Lys49-PLA2 is activated by the entrance of a hydrophobic molecule (e.g. fatty acid) at the hydrophobic channel of the protein leading to a reorientation of a monomer. This reorientation causes a transition between 'inactive' to 'active' states, causing alignment of C-terminal and membrane-docking sites (MDoS) side-by-side and putting the membrane-disruption sites (MDiS) in the same plane, exposed to solvent and in a symmetric position for both monomers. The MDoS region stabilizes the toxin on membrane by the interaction of charged residues with phospholipid head groups. Subsequently, the MDiS region destabilizes the membrane with penetration of hydrophobic residues. This insertion causes a disorganization of the membrane, allowing an uncontrolled influx of ions (i.e. calcium and sodium), and eventually triggering irreversible intracellular alterations and cell death. This chain is Basic phospholipase A2 homolog Ts-K49b, found in Trimeresurus stejnegeri (Chinese green tree viper).